Consider the following 365-residue polypeptide: Histidinol-phosphate aminotransferase (365 aa).

Residue K220 is modified to N6-(pyridoxal phosphate)lysine.

This sequence belongs to the class-II pyridoxal-phosphate-dependent aminotransferase family. Histidinol-phosphate aminotransferase subfamily. As to quaternary structure, homodimer. Pyridoxal 5'-phosphate is required as a cofactor.

It catalyses the reaction L-histidinol phosphate + 2-oxoglutarate = 3-(imidazol-4-yl)-2-oxopropyl phosphate + L-glutamate. It participates in amino-acid biosynthesis; L-histidine biosynthesis; L-histidine from 5-phospho-alpha-D-ribose 1-diphosphate: step 7/9. The polypeptide is Histidinol-phosphate aminotransferase (Xylella fastidiosa (strain 9a5c)).